Here is a 348-residue protein sequence, read N- to C-terminus: Erlin-1 (348 aa).

The Cytoplasmic segment spans residues 1 to 7 (MNMTQAR). The chain crosses the membrane as a helical span at residues 8–28 (LLVAAVVGLVAILLYASIHKI). Residues 29-348 (EEGHLAVYYR…SPIQNKENAG (320 aa)) lie on the Lumenal side of the membrane. An N-linked (GlcNAc...) asparagine glycan is attached at asparagine 108. Position 269 is an N6-acetyllysine (lysine 269). The span at 318–336 (DGRTGREDSLPPEEAREPS) shows a compositional bias: basic and acidic residues. Positions 318–348 (DGRTGREDSLPPEEAREPSGESPIQNKENAG) are disordered. Residues 339–348 (SPIQNKENAG) are compositionally biased toward polar residues.

The protein belongs to the band 7/mec-2 family. As to quaternary structure, forms a heteromeric complex with ERLIN2. In complex with ERLIN2, interacts with RNF170. Interacts with AMFR and SYVN1. Post-translationally, deubiquitinated by USP25; leading to stabilization.

The protein resides in the endoplasmic reticulum membrane. Functionally, component of the ERLIN1/ERLIN2 complex which mediates the endoplasmic reticulum-associated degradation (ERAD) of inositol 1,4,5-trisphosphate receptors (IP3Rs). Involved in regulation of cellular cholesterol homeostasis by regulation the SREBP signaling pathway. Binds cholesterol and may promote ER retention of the SCAP-SREBF complex. In Mus musculus (Mouse), this protein is Erlin-1.